The sequence spans 57 residues: Large ribosomal subunit protein bL32 (57 aa).

Positions M1–D20 are disordered. The segment covering R7 to H19 has biased composition (basic residues).

It belongs to the bacterial ribosomal protein bL32 family.

This is Large ribosomal subunit protein bL32 from Ureaplasma urealyticum serovar 10 (strain ATCC 33699 / Western).